Reading from the N-terminus, the 339-residue chain is Uroporphyrinogen decarboxylase (339 aa).

Substrate-binding positions include 23 to 27, Asp-72, Tyr-147, Ser-202, and His-315; that span reads RQAGR.

It belongs to the uroporphyrinogen decarboxylase family. In terms of assembly, homodimer.

The protein resides in the cytoplasm. The enzyme catalyses uroporphyrinogen III + 4 H(+) = coproporphyrinogen III + 4 CO2. It participates in porphyrin-containing compound metabolism; protoporphyrin-IX biosynthesis; coproporphyrinogen-III from 5-aminolevulinate: step 4/4. In terms of biological role, catalyzes the decarboxylation of four acetate groups of uroporphyrinogen-III to yield coproporphyrinogen-III. This Desulfotalea psychrophila (strain LSv54 / DSM 12343) protein is Uroporphyrinogen decarboxylase.